The following is a 121-amino-acid chain: Large ribosomal subunit protein uL18 (121 aa).

This sequence belongs to the universal ribosomal protein uL18 family. In terms of assembly, part of the 50S ribosomal subunit; part of the 5S rRNA/L5/L18/L25 subcomplex. Contacts the 5S and 23S rRNAs.

In terms of biological role, this is one of the proteins that bind and probably mediate the attachment of the 5S RNA into the large ribosomal subunit, where it forms part of the central protuberance. In Leptothrix cholodnii (strain ATCC 51168 / LMG 8142 / SP-6) (Leptothrix discophora (strain SP-6)), this protein is Large ribosomal subunit protein uL18.